The primary structure comprises 293 residues: Mediator of RNA polymerase II transcription subunit 27 (293 aa).

This sequence belongs to the Mediator complex subunit 27 family. As to quaternary structure, component of the Mediator complex, which includes at least CDK8, MED4, MED6, MED11, MED14, MED17, MED18, MED20, MED21, MED22, MED27, MED28, MED30 and MED31.

The protein localises to the nucleus. Functionally, component of the Mediator complex, a coactivator involved in the regulated transcription of nearly all RNA polymerase II-dependent genes. Mediator functions as a bridge to convey information from gene-specific regulatory proteins to the basal RNA polymerase II transcription machinery. Mediator is recruited to promoters by direct interactions with regulatory proteins and serves as a scaffold for the assembly of a functional preinitiation complex with RNA polymerase II and the general transcription factors. Required for activated transcription of the MtnA gene. The chain is Mediator of RNA polymerase II transcription subunit 27 (MED27) from Drosophila melanogaster (Fruit fly).